The following is a 21-amino-acid chain: Basic phospholipase A2 BjIV (21 aa).

The protein belongs to the phospholipase A2 family. Group II subfamily. As to quaternary structure, can form dimers, trimers and tetramers. Ca(2+) serves as cofactor. Contains seven disulfide bonds. Expressed by the venom gland.

The protein resides in the secreted. It catalyses the reaction a 1,2-diacyl-sn-glycero-3-phosphocholine + H2O = a 1-acyl-sn-glycero-3-phosphocholine + a fatty acid + H(+). Its activity is regulated as follows. Inhibited by crotapotin. Functionally, snake venom phospholipase A2 has a high enzymatic activity and produces moderate myonecrosis in skeletal muscle, but shows no neuromuscular activity in mouse phrenic nerve-diaphragm preparations. PLA2 catalyzes the calcium-dependent hydrolysis of the 2-acyl groups in 3-sn-phosphoglycerides. The sequence is that of Basic phospholipase A2 BjIV from Bothrops jararacussu (Jararacussu).